The chain runs to 244 residues: Aspartate/glutamate leucyltransferase (244 aa).

The protein belongs to the R-transferase family. Bpt subfamily.

It localises to the cytoplasm. It catalyses the reaction N-terminal L-glutamyl-[protein] + L-leucyl-tRNA(Leu) = N-terminal L-leucyl-L-glutamyl-[protein] + tRNA(Leu) + H(+). It carries out the reaction N-terminal L-aspartyl-[protein] + L-leucyl-tRNA(Leu) = N-terminal L-leucyl-L-aspartyl-[protein] + tRNA(Leu) + H(+). In terms of biological role, functions in the N-end rule pathway of protein degradation where it conjugates Leu from its aminoacyl-tRNA to the N-termini of proteins containing an N-terminal aspartate or glutamate. This is Aspartate/glutamate leucyltransferase from Bordetella bronchiseptica (strain ATCC BAA-588 / NCTC 13252 / RB50) (Alcaligenes bronchisepticus).